The primary structure comprises 185 residues: Putative manganese efflux pump MntP (185 aa).

The next 6 helical transmembrane spans lie at 4 to 24, 36 to 56, 65 to 85, 105 to 125, 130 to 150, and 165 to 185; these read LTSS…ALAI, ALVI…AGWI, ISSY…IKMI, VILL…SFGV, VLMP…AGVF, and IFGG…ILPL.

The protein belongs to the MntP (TC 9.B.29) family.

It localises to the cell membrane. Its function is as follows. Probably functions as a manganese efflux pump. The protein is Putative manganese efflux pump MntP of Methanoregula boonei (strain DSM 21154 / JCM 14090 / 6A8).